A 172-amino-acid chain; its full sequence is Putative Dresden prostate carcinoma protein 2 (172 aa).

Residues 40 to 61 (QCEEEEAMTPRPTKARAPLPSA) form a disordered region.

In terms of tissue distribution, very high expression in prostate and prostate cancer. Faint expression in other tissues.

The chain is Putative Dresden prostate carcinoma protein 2 (HMGN2P46) from Homo sapiens (Human).